The primary structure comprises 356 residues: MKFIDRVKIHVKAGDGGRGCLSFRREKFIPKGGPDGGDGGRGGNIVLRVDEGLGTLLDLRYQIHYKAQRGAHGMGKNCHGKNGEDLEIRVPPGVLVYDAETDELLADLTEGCHELVVVRGGMGGRGNARFATSTNRAPRHVQPGVEGEERWLRLELKLLADVGLLGMPNAGKSTLISAVSAARPKIADYPFTTLVPNLGVVRCGGFKTFVMADIPGLIEGASEGHGLGTRFLRHVERTDLFLHLVDLSDLQEGDPMERFALINRELARHNPELMEKPQLVVLSKIDVSEVRERLDAVRAAFAAEGIRTLAISAVTGEGLKELVAEVARELEKLRASRLQADQKAAEEDEPWQPDLS.

The Obg domain maps to 1-159 (MKFIDRVKIH…RWLRLELKLL (159 aa)). One can recognise an OBG-type G domain in the interval 160–331 (ADVGLLGMPN…LVAEVARELE (172 aa)). Residues 166 to 173 (GMPNAGKS), 191 to 195 (FTTLV), 213 to 216 (DIPG), 283 to 286 (SKID), and 312 to 314 (SAV) contribute to the GTP site. The Mg(2+) site is built by S173 and T193.

This sequence belongs to the TRAFAC class OBG-HflX-like GTPase superfamily. OBG GTPase family. As to quaternary structure, monomer. Requires Mg(2+) as cofactor.

The protein localises to the cytoplasm. Its function is as follows. An essential GTPase which binds GTP, GDP and possibly (p)ppGpp with moderate affinity, with high nucleotide exchange rates and a fairly low GTP hydrolysis rate. Plays a role in control of the cell cycle, stress response, ribosome biogenesis and in those bacteria that undergo differentiation, in morphogenesis control. The chain is GTPase Obg from Syntrophotalea carbinolica (strain DSM 2380 / NBRC 103641 / GraBd1) (Pelobacter carbinolicus).